A 447-amino-acid chain; its full sequence is Rab GDP dissociation inhibitor alpha (447 aa).

This sequence belongs to the Rab GDI family. As to quaternary structure, interacts with RHOH. Interacts with the non-phosphorylated forms of RAB1A, RAB3A, RAB5A, RAB5B, RAB5C, RAB8A, RAB8B, RAB10, RAB12, RAB35, and RAB43.

It localises to the cytoplasm. The protein resides in the golgi apparatus. It is found in the trans-Golgi network. In terms of biological role, regulates the GDP/GTP exchange reaction of most Rab proteins by inhibiting the dissociation of GDP from them, and the subsequent binding of GTP to them. Promotes the dissociation of GDP-bound Rab proteins from the membrane and inhibits their activation. Promotes the dissociation of RAB1A, RAB3A, RAB5A and RAB10 from membranes. This Macaca fascicularis (Crab-eating macaque) protein is Rab GDP dissociation inhibitor alpha (GDI1).